The chain runs to 226 residues: ATP synthase subunit a (226 aa).

5 consecutive transmembrane segments (helical) span residues 20–40, 74–94, 100–120, 158–180, and 197–217; these read LNWL…WLLP, FISL…PYIF, LTLT…YGWI, LAVR…GNTG, and IALL…FAVL.

This sequence belongs to the ATPase A chain family. As to quaternary structure, F-type ATPases have 2 components, CF(1) - the catalytic core - and CF(0) - the membrane proton channel. CF(1) has five subunits: alpha(3), beta(3), gamma(1), delta(1), epsilon(1). CF(0) has three main subunits: a, b and c.

The protein resides in the mitochondrion inner membrane. In terms of biological role, mitochondrial membrane ATP synthase (F(1)F(0) ATP synthase or Complex V) produces ATP from ADP in the presence of a proton gradient across the membrane which is generated by electron transport complexes of the respiratory chain. F-type ATPases consist of two structural domains, F(1) - containing the extramembraneous catalytic core and F(0) - containing the membrane proton channel, linked together by a central stalk and a peripheral stalk. During catalysis, ATP synthesis in the catalytic domain of F(1) is coupled via a rotary mechanism of the central stalk subunits to proton translocation. Key component of the proton channel; it may play a direct role in the translocation of protons across the membrane. This is ATP synthase subunit a (ATP6) from Anopheles quadrimaculatus (Common malaria mosquito).